Reading from the N-terminus, the 198-residue chain is Large ribosomal subunit protein bL25 (198 aa).

This sequence belongs to the bacterial ribosomal protein bL25 family. CTC subfamily. Part of the 50S ribosomal subunit; part of the 5S rRNA/L5/L18/L25 subcomplex. Contacts the 5S rRNA. Binds to the 5S rRNA independently of L5 and L18.

Its function is as follows. This is one of the proteins that binds to the 5S RNA in the ribosome where it forms part of the central protuberance. This chain is Large ribosomal subunit protein bL25, found in Streptomyces coelicolor (strain ATCC BAA-471 / A3(2) / M145).